A 450-amino-acid polypeptide reads, in one-letter code: Putative receptor-like protein kinase At1g72540 (450 aa).

Residue Thr73 is modified to Phosphothreonine. The 282-residue stretch at 84–365 (FSKYNFLGEG…TVVKTLEPIL (282 aa)) folds into the Protein kinase domain. ATP contacts are provided by residues 90-98 (LGEGGFGEV) and Lys119. Tyr164 carries the phosphotyrosine modification. Asp214 serves as the catalytic Proton acceptor. Position 218 is a phosphoserine (Ser218). A Phosphothreonine modification is found at Thr254. Phosphotyrosine is present on Tyr262.

It belongs to the protein kinase superfamily. Ser/Thr protein kinase family.

It carries out the reaction L-seryl-[protein] + ATP = O-phospho-L-seryl-[protein] + ADP + H(+). It catalyses the reaction L-threonyl-[protein] + ATP = O-phospho-L-threonyl-[protein] + ADP + H(+). The chain is Putative receptor-like protein kinase At1g72540 from Arabidopsis thaliana (Mouse-ear cress).